A 243-amino-acid chain; its full sequence is uncharacterized protein (243 aa).

This sequence belongs to the mycobacterial PPE family.

Its subcellular location is the cell membrane. This is an uncharacterized protein from Mycobacterium tuberculosis (strain CDC 1551 / Oshkosh).